The primary structure comprises 295 residues: Reticulon-like protein 1 (295 aa).

The Cytoplasmic portion of the chain corresponds to 1–50 (MSASAQHSQAQQQQQQKSCNCDLLLWRNPVQTGKYFGGSLLALLILKKVN). Positions 20-220 (NCDLLLWRNP…ISNLVKSKTA (201 aa)) constitute a Reticulon domain. Residues 51–73 (LITFFLKVAYTILFTTGSIEFVS) form a helical membrane-spanning segment. At 74–142 (KLFLGQGLIT…ALFLLHKFFS (69 aa)) the chain is on the lumenal side. A helical transmembrane segment spans residues 143–163 (WFSIWTIVFVADIFTFTLPVI). The Cytoplasmic segment spans residues 164 to 295 (YHSYKHEIDA…LQNELEKNNA (132 aa)). Residues Thr-186 and Thr-219 each carry the phosphothreonine modification. Polar residues predominate over residues 219–235 (TAPVSSTAGPQTASTSK). The tract at residues 219-295 (TAPVSSTAGP…LQNELEKNNA (77 aa)) is disordered. Residue Ser-232 is modified to Phosphoserine. Residues 265 to 295 (STTQEFNVDELSNELKKSTKNLQNELEKNNA) adopt a coiled-coil conformation.

Interacts with POM33.

The protein resides in the endoplasmic reticulum membrane. The sequence is that of Reticulon-like protein 1 (RTN1) from Saccharomyces cerevisiae (strain ATCC 204508 / S288c) (Baker's yeast).